A 671-amino-acid polypeptide reads, in one-letter code: DNA ligase (671 aa).

NAD(+) contacts are provided by residues 32–36 (DAEYD), 81–82 (SL), and Glu113. Lys115 serves as the catalytic N6-AMP-lysine intermediate. NAD(+) is bound by residues Arg136, Glu173, Lys290, and Lys314. 4 residues coordinate Zn(2+): Cys408, Cys411, Cys426, and Cys432. The BRCT domain occupies 593–671 (EIDSPFAGKT…EAEMLRLLGV (79 aa)).

The protein belongs to the NAD-dependent DNA ligase family. LigA subfamily. Mg(2+) is required as a cofactor. The cofactor is Mn(2+).

It catalyses the reaction NAD(+) + (deoxyribonucleotide)n-3'-hydroxyl + 5'-phospho-(deoxyribonucleotide)m = (deoxyribonucleotide)n+m + AMP + beta-nicotinamide D-nucleotide.. In terms of biological role, DNA ligase that catalyzes the formation of phosphodiester linkages between 5'-phosphoryl and 3'-hydroxyl groups in double-stranded DNA using NAD as a coenzyme and as the energy source for the reaction. It is essential for DNA replication and repair of damaged DNA. This is DNA ligase from Salmonella arizonae (strain ATCC BAA-731 / CDC346-86 / RSK2980).